The primary structure comprises 396 residues: MDPRGTKRGAEKTEVAEPRNKLPRPAPSLPTDPALYSGPFPFYRRPSELGCFSLDAQRQYHGDARALRYYSPPPTNGPGPNFDLRDGYPDRYQPRDEEVQERLDHLLCWLLEHRGRLEGGPGWLAEAIVTWRGHLTKLLTTPYERQEGWQLAASRFQGTLYLSEVETPNARAQRLARPPLLRELMYMGYKFEQYMCADKPGSSPDPSGEVNTNVAFCSVLRSRLGSHPLLFSGEVDCTDPQAPSTQPPTCYVELKTSKEMHSPGQWRSFYRHKLLKWWAQSFLPGVPNVVAGFRNPDGFVSSLKTFPTMKMFEYVRNDRDGWNPSVCMNFCAAFLSFAQSTVVQDDPRLVHLFSWEPGGPVTVSVHQDAPYAFLPIWYVEAMTQDLPSPPKTPSPK.

Over residues 1-20 (MDPRGTKRGAEKTEVAEPRN) the composition is skewed to basic and acidic residues. The tract at residues 1 to 37 (MDPRGTKRGAEKTEVAEPRNKLPRPAPSLPTDPALYS) is disordered. Substrate is bound by residues R58, E101, and 131–133 (WRG). Residue E192 participates in Mg(2+) binding. C217 and E234 together coordinate substrate. The Mg(2+) site is built by E234, D236, E253, and L254. The substrate site is built by K255 and Q280. Position 392 is a phosphothreonine (T392). S394 carries the phosphoserine modification.

It belongs to the DXO/Dom3Z family. It depends on Mg(2+) as a cofactor. As to expression, ubiquitously expressed.

The protein localises to the nucleus. The catalysed reaction is a 5'-end triphospho-ribonucleoside in mRNA + H2O = a 5'-end phospho-ribonucleoside in mRNA + diphosphate + H(+). The enzyme catalyses a 5'-end NAD(+)-phospho-ribonucleoside in mRNA + H2O = a 5'-end phospho-ribonucleoside in mRNA + NAD(+) + H(+). It carries out the reaction a 5'-end NAD(+)-phospho-ribonucleoside in snoRNA + H2O = a 5'-end phospho-ribonucleoside in snoRNA + NAD(+) + H(+). It catalyses the reaction a 5'-end (N(7)-methyl 5'-triphosphoguanosine)-ribonucleoside-ribonucleotide in mRNA + H2O = a (N(7)-methyl 5'-triphosphoguanosine)-nucleoside + a 5'-end phospho-ribonucleoside in mRNA + H(+). The catalysed reaction is a 5'-end FAD-phospho-ribonucleoside in mRNA + H2O = a 5'-end phospho-ribonucleoside in mRNA + FAD + H(+). The enzyme catalyses a 5'-end CoA-ribonucleoside in mRNA + H2O = 3'-dephospho-CoA + a 5'-end phospho-ribonucleoside in mRNA + H(+). Decapping enzyme for NAD-capped RNAs: specifically hydrolyzes the nicotinamide adenine dinucleotide (NAD) cap from a subset of RNAs by removing the entire NAD moiety from the 5'-end of an NAD-capped RNA. The NAD-cap is present at the 5'-end of some RNAs and snoRNAs. In contrast to the canonical 5'-end N7 methylguanosine (m7G) cap, the NAD cap promotes mRNA decay. Preferentially acts on NAD-capped transcripts in response to environmental stress. Also acts as a non-canonical decapping enzyme that removes the entire cap structure of m7G capped or incompletely capped RNAs and mediates their subsequent degradation. Specifically degrades pre-mRNAs with a defective 5'-end m7G cap and is part of a pre-mRNA capping quality control. Has decapping activity toward incomplete 5'-end m7G cap mRNAs such as unmethylated 5'-end-capped RNA (cap0), while it has no activity toward 2'-O-ribose methylated m7G cap (cap1). In contrast to canonical decapping enzymes DCP2 and NUDT16, which cleave the cap within the triphosphate linkage, the decapping activity releases the entire cap structure GpppN and a 5'-end monophosphate RNA. Also has 5'-3' exoribonuclease activities: The 5'-end monophosphate RNA is then degraded by the 5'-3' exoribonuclease activity, enabling this enzyme to decap and degrade incompletely capped mRNAs. Also possesses RNA 5'-pyrophosphohydrolase activity by hydrolyzing the 5'-end triphosphate to release pyrophosphates. Exhibits decapping activity towards FAD-capped RNAs. Exhibits decapping activity towards dpCoA-capped RNAs in vitro. The polypeptide is Decapping and exoribonuclease protein (Homo sapiens (Human)).